The chain runs to 427 residues: Imidazolonepropionase (427 aa).

H96 and H98 together coordinate Fe(3+). Residues H96 and H98 each coordinate Zn(2+). R105, Y168, and H201 together coordinate 4-imidazolone-5-propanoate. Residue Y168 participates in N-formimidoyl-L-glutamate binding. H265 is a binding site for Fe(3+). Zn(2+) is bound at residue H265. 4-imidazolone-5-propanoate is bound at residue Q268. D340 is a Fe(3+) binding site. Position 340 (D340) interacts with Zn(2+). Residues N342 and G344 each contribute to the N-formimidoyl-L-glutamate site. T345 provides a ligand contact to 4-imidazolone-5-propanoate.

This sequence belongs to the metallo-dependent hydrolases superfamily. HutI family. Zn(2+) is required as a cofactor. It depends on Fe(3+) as a cofactor.

The protein localises to the cytoplasm. The enzyme catalyses 4-imidazolone-5-propanoate + H2O = N-formimidoyl-L-glutamate. It functions in the pathway amino-acid degradation; L-histidine degradation into L-glutamate; N-formimidoyl-L-glutamate from L-histidine: step 3/3. In terms of biological role, catalyzes the hydrolytic cleavage of the carbon-nitrogen bond in imidazolone-5-propanoate to yield N-formimidoyl-L-glutamate. It is the third step in the universal histidine degradation pathway. This is Imidazolonepropionase from Psychrobacter cryohalolentis (strain ATCC BAA-1226 / DSM 17306 / VKM B-2378 / K5).